Here is a 461-residue protein sequence, read N- to C-terminus: MFLDDTIAAIATAHGEAGIGIVRISGEKALHIIDQVFQSKQGKKLKDISPRRITYGHIIDTERNERIDEVLVSYMKGPHTYTTEDVVEINCHGGMIPVKRILELILRKGARAADAGEFTKRAFLNGRIDLAQAEAVMDLVSAKTDMGFDVALNQLEGSLSKRVKKVKDELLDMLAHIEVSIDFSDEDVDEVTLDLLLKQSMEIEKKIKVLLETADTGKILREGLNTVIVGKPNVGKSSLLNALLKESRAIVTEVPGTTRDAIEEHFNIRGIPLNLIDTAGIRETEDIVEKIGVERSKAFFNKADLIILMLDASRELTPEDLQIMELVKSKKALILVNKTDLTSQIDYDRIIEIVGEKKVIKISLIEESGLEEVEEALVEIVYKGETRAKDSLLVTNVRHKNALERALESLTDGVQAIKQKMPLDFVEVDVKNAWDALGEITGDTVGEDLLDHIFQNFCIGK.

Residues Arg23, Glu88, and Arg127 each contribute to the (6S)-5-formyl-5,6,7,8-tetrahydrofolate site. The TrmE-type G domain occupies 223 to 382 (GLNTVIVGKP…VEEALVEIVY (160 aa)). Asn233 serves as a coordination point for K(+). GTP contacts are provided by residues 233–238 (NVGKSS), 252–258 (TEVPGTT), and 277–280 (DTAG). Residue Ser237 participates in Mg(2+) binding. K(+)-binding residues include Thr252, Val254, and Thr257. A Mg(2+)-binding site is contributed by Thr258. Residue Lys461 participates in (6S)-5-formyl-5,6,7,8-tetrahydrofolate binding.

Belongs to the TRAFAC class TrmE-Era-EngA-EngB-Septin-like GTPase superfamily. TrmE GTPase family. In terms of assembly, homodimer. Heterotetramer of two MnmE and two MnmG subunits. The cofactor is K(+).

It is found in the cytoplasm. In terms of biological role, exhibits a very high intrinsic GTPase hydrolysis rate. Involved in the addition of a carboxymethylaminomethyl (cmnm) group at the wobble position (U34) of certain tRNAs, forming tRNA-cmnm(5)s(2)U34. This chain is tRNA modification GTPase MnmE, found in Alkaliphilus metalliredigens (strain QYMF).